The primary structure comprises 298 residues: Inosose dehydratase (298 aa).

This sequence belongs to the IolE/MocC family. The cofactor is glutathione. Co(2+) serves as cofactor. Mn(2+) is required as a cofactor.

The enzyme catalyses scyllo-inosose = 3D-3,5/4-trihydroxycyclohexane-1,2-dione + H2O. The protein operates within polyol metabolism; myo-inositol degradation into acetyl-CoA; acetyl-CoA from myo-inositol: step 2/7. Functionally, catalyzes the dehydration of inosose (2-keto-myo-inositol, 2KMI or 2,4,6/3,5-pentahydroxycyclohexanone) to 3D-(3,5/4)-trihydroxycyclohexane-1,2-dione (D-2,3-diketo-4-deoxy-epi-inositol). This is Inosose dehydratase from Clostridium botulinum (strain Eklund 17B / Type B).